The following is a 355-amino-acid chain: Isopentenyl-diphosphate delta-isomerase (355 aa).

Position 12–13 (12–13) interacts with substrate; that stretch reads RK. FMN is bound by residues Ser70, 71-73, Ser101, and Asn130; that span reads SMT. 101 to 103 lines the substrate pocket; it reads SMR. A substrate-binding site is contributed by Gln165. Glu166 contacts Mg(2+). FMN is bound by residues Lys197 and 308–309; that span reads AG.

This sequence belongs to the IPP isomerase type 2 family. As to quaternary structure, homooctamer. Dimer of tetramers. Requires FMN as cofactor. NADPH is required as a cofactor. Mg(2+) serves as cofactor.

The protein localises to the cytoplasm. It catalyses the reaction isopentenyl diphosphate = dimethylallyl diphosphate. Involved in the biosynthesis of isoprenoids. Catalyzes the 1,3-allylic rearrangement of the homoallylic substrate isopentenyl (IPP) to its allylic isomer, dimethylallyl diphosphate (DMAPP). The protein is Isopentenyl-diphosphate delta-isomerase of Chlorobium phaeovibrioides (strain DSM 265 / 1930) (Prosthecochloris vibrioformis (strain DSM 265)).